Reading from the N-terminus, the 659-residue chain is Cysteine-rich receptor-like protein kinase 5 (659 aa).

The first 24 residues, 1 to 24, serve as a signal peptide directing secretion; sequence MSAYTSLNFLFLLTFFIGSLRVSA. Residues 25-279 lie on the Extracellular side of the membrane; sequence QLQDPTYVGH…FPPGKGKNST (255 aa). Gnk2-homologous domains follow at residues 28–132 and 138–243; these read DPTY…DRNI and TTTT…VYPF. Asparagine 175 and asparagine 277 each carry an N-linked (GlcNAc...) asparagine glycan. Residues 280–300 traverse the membrane as a helical segment; sequence VIIIAIVVPVAISVLICVAVF. Residues 301–659 lie on the Cytoplasmic side of the membrane; that stretch reads SFHASKRAKK…AASITILAPR (359 aa). Residues 340–619 enclose the Protein kinase domain; that stretch reads FSMCNKLGQG…QMLTTSSIAL (280 aa). ATP contacts are provided by residues 346-354 and lysine 368; that span reads LGQGGFGQV. Tyrosine 413 is subject to Phosphotyrosine. Aspartate 465 acts as the Proton acceptor in catalysis. A Phosphothreonine modification is found at threonine 505. Phosphotyrosine is present on tyrosine 513.

This sequence belongs to the protein kinase superfamily. Ser/Thr protein kinase family. CRK subfamily. In terms of assembly, interacts with CRKIP1 (KAPP), CRKIP2 and CRKIP3, three kinase-associated type 2C proteins.

It localises to the membrane. The catalysed reaction is L-seryl-[protein] + ATP = O-phospho-L-seryl-[protein] + ADP + H(+). It carries out the reaction L-threonyl-[protein] + ATP = O-phospho-L-threonyl-[protein] + ADP + H(+). Its function is as follows. Involved in multiple distinct defense responses. May function as a disease resistance (R) protein. This Arabidopsis thaliana (Mouse-ear cress) protein is Cysteine-rich receptor-like protein kinase 5 (CRK5).